The primary structure comprises 287 residues: Coatomer subunit epsilon-1 (287 aa).

Belongs to the COPE family. Oligomeric complex that consists of at least the alpha, beta, beta', gamma, delta, epsilon and zeta subunits.

Its subcellular location is the cytoplasm. The protein resides in the golgi apparatus membrane. It is found in the cytoplasmic vesicle. It localises to the COPI-coated vesicle membrane. Its function is as follows. The coatomer is a cytosolic protein complex that binds to dilysine motifs and reversibly associates with Golgi non-clathrin-coated vesicles, which further mediate biosynthetic protein transport from the ER, via the Golgi up to the trans Golgi network. The coatomer complex is required for budding from Golgi membranes, and is essential for the retrograde Golgi-to-ER transport of dilysine-tagged proteins. In Oryza sativa subsp. japonica (Rice), this protein is Coatomer subunit epsilon-1 (COPE1).